Here is a 1077-residue protein sequence, read N- to C-terminus: Error-prone DNA polymerase (1077 aa).

The protein belongs to the DNA polymerase type-C family. DnaE2 subfamily.

Its subcellular location is the cytoplasm. It carries out the reaction DNA(n) + a 2'-deoxyribonucleoside 5'-triphosphate = DNA(n+1) + diphosphate. DNA polymerase involved in damage-induced mutagenesis and translesion synthesis (TLS). It is not the major replicative DNA polymerase. The chain is Error-prone DNA polymerase from Brucella melitensis biotype 1 (strain ATCC 23456 / CCUG 17765 / NCTC 10094 / 16M).